Here is a 212-residue protein sequence, read N- to C-terminus: Uracil phosphoribosyltransferase (212 aa).

Residues Arg-78, Arg-103, and 130–138 (DPMLATGGS) contribute to the 5-phospho-alpha-D-ribose 1-diphosphate site. Uracil is bound by residues Ile-193 and 198 to 200 (GDA). Position 199 (Asp-199) interacts with 5-phospho-alpha-D-ribose 1-diphosphate.

This sequence belongs to the UPRTase family. The cofactor is Mg(2+).

The enzyme catalyses UMP + diphosphate = 5-phospho-alpha-D-ribose 1-diphosphate + uracil. The protein operates within pyrimidine metabolism; UMP biosynthesis via salvage pathway; UMP from uracil: step 1/1. Allosterically activated by GTP. Its function is as follows. Catalyzes the conversion of uracil and 5-phospho-alpha-D-ribose 1-diphosphate (PRPP) to UMP and diphosphate. The chain is Uracil phosphoribosyltransferase from Stutzerimonas stutzeri (strain A1501) (Pseudomonas stutzeri).